Reading from the N-terminus, the 351-residue chain is Ribosomal RNA small subunit methyltransferase H (351 aa).

Residues 48–50 (GGY), D67, F94, D115, and Q122 each bind S-adenosyl-L-methionine. Residues 274–351 (AAQASRHVPG…PAPQGRGPRR (78 aa)) are disordered.

This sequence belongs to the methyltransferase superfamily. RsmH family.

Its subcellular location is the cytoplasm. The enzyme catalyses cytidine(1402) in 16S rRNA + S-adenosyl-L-methionine = N(4)-methylcytidine(1402) in 16S rRNA + S-adenosyl-L-homocysteine + H(+). In terms of biological role, specifically methylates the N4 position of cytidine in position 1402 (C1402) of 16S rRNA. The sequence is that of Ribosomal RNA small subunit methyltransferase H from Methylorubrum extorquens (strain PA1) (Methylobacterium extorquens).